The primary structure comprises 224 residues: Urease accessory protein UreF (224 aa).

This sequence belongs to the UreF family. UreD, UreF and UreG form a complex that acts as a GTP-hydrolysis-dependent molecular chaperone, activating the urease apoprotein by helping to assemble the nickel containing metallocenter of UreC. The UreE protein probably delivers the nickel.

The protein localises to the cytoplasm. Functionally, required for maturation of urease via the functional incorporation of the urease nickel metallocenter. This Pseudomonas putida (strain ATCC 47054 / DSM 6125 / CFBP 8728 / NCIMB 11950 / KT2440) protein is Urease accessory protein UreF.